The following is a 516-amino-acid chain: Bifunctional pantoate ligase/cytidylate kinase (516 aa).

The segment at 1 to 279 (MVRKIFQTNA…CGSTRLIDHT (279 aa)) is pantoate--beta-alanine ligase. An ATP-binding site is contributed by 29–36 (MGGLHPGH). His36 serves as the catalytic Proton donor. Gln64 contributes to the (R)-pantoate binding site. Gln64 contributes to the beta-alanine binding site. 153-156 (GEKD) lines the ATP pocket. Position 159 (Gln159) interacts with (R)-pantoate. Residue 190 to 193 (YSSR) participates in ATP binding. Positions 280–516 (FLMHRKPIIA…PEEVWPTPNS (237 aa)) are cytidylate kinase.

The protein in the N-terminal section; belongs to the pantothenate synthetase family. This sequence in the C-terminal section; belongs to the cytidylate kinase family. Type 1 subfamily.

The protein resides in the cytoplasm. The enzyme catalyses (R)-pantoate + beta-alanine + ATP = (R)-pantothenate + AMP + diphosphate + H(+). It catalyses the reaction CMP + ATP = CDP + ADP. It carries out the reaction dCMP + ATP = dCDP + ADP. It participates in cofactor biosynthesis; (R)-pantothenate biosynthesis; (R)-pantothenate from (R)-pantoate and beta-alanine: step 1/1. Functionally, catalyzes the condensation of pantoate with beta-alanine in an ATP-dependent reaction via a pantoyl-adenylate intermediate. Catalyzes the transfer of a phosphate group from ATP to either CMP or dCMP to form CDP or dCDP and ADP, respectively. The chain is Bifunctional pantoate ligase/cytidylate kinase from Prochlorococcus marinus (strain NATL1A).